Here is a 156-residue protein sequence, read N- to C-terminus: uncharacterized protein (156 aa).

3 helical membrane-spanning segments follow: residues 21–41 (GVLFSSFALLFMFFNSLAISL), 54–74 (TICSSLIPCRTLIFSLWIDFA), and 80–100 (SVLVCCFSASLPLVFFFWALF).

It is found in the membrane. This is an uncharacterized protein from Saccharomyces cerevisiae (strain ATCC 204508 / S288c) (Baker's yeast).